Here is a 466-residue protein sequence, read N- to C-terminus: ATP synthase subunit beta (466 aa).

155 to 162 (GGAGVGKT) is an ATP binding site.

It belongs to the ATPase alpha/beta chains family. As to quaternary structure, F-type ATPases have 2 components, CF(1) - the catalytic core - and CF(0) - the membrane proton channel. CF(1) has five subunits: alpha(3), beta(3), gamma(1), delta(1), epsilon(1). CF(0) has three main subunits: a(1), b(2) and c(9-12). The alpha and beta chains form an alternating ring which encloses part of the gamma chain. CF(1) is attached to CF(0) by a central stalk formed by the gamma and epsilon chains, while a peripheral stalk is formed by the delta and b chains.

Its subcellular location is the cell inner membrane. It carries out the reaction ATP + H2O + 4 H(+)(in) = ADP + phosphate + 5 H(+)(out). Its function is as follows. Produces ATP from ADP in the presence of a proton gradient across the membrane. The catalytic sites are hosted primarily by the beta subunits. The chain is ATP synthase subunit beta from Bordetella petrii (strain ATCC BAA-461 / DSM 12804 / CCUG 43448).